Consider the following 435-residue polypeptide: Probable exopolygalacturonase B (435 aa).

The signal sequence occupies residues 1–15 (MKFFTAALFASAVSA). Residues asparagine 59, asparagine 184, and asparagine 224 are each glycosylated (N-linked (GlcNAc...) asparagine). Catalysis depends on aspartate 254, which acts as the Proton donor. A disulfide bond links cysteine 256 and cysteine 273. N-linked (GlcNAc...) asparagine glycans are attached at residues asparagine 262 and asparagine 274. Histidine 277 is a catalytic residue. N-linked (GlcNAc...) asparagine glycans are attached at residues asparagine 301, asparagine 328, asparagine 365, and asparagine 368. Cysteine 391 and cysteine 397 are disulfide-bonded.

The protein belongs to the glycosyl hydrolase 28 family.

It is found in the secreted. It carries out the reaction [(1-&gt;4)-alpha-D-galacturonosyl](n) + H2O = alpha-D-galacturonate + [(1-&gt;4)-alpha-D-galacturonosyl](n-1). Specific in hydrolyzing the terminal glycosidic bond of polygalacturonic acid and oligogalacturonates. In Aspergillus terreus (strain NIH 2624 / FGSC A1156), this protein is Probable exopolygalacturonase B (pgxB).